Reading from the N-terminus, the 250-residue chain is Doublesex- and mab-3-related transcription factor dmd-3 (250 aa).

The segment at residues 19-68 (CQRCLNHGLREKRKNHKLSCTFRFCQCSNCIMVERRRQLNSRLMQIDGSR) is a DNA-binding region (DM 1). Over residues 90–100 (CTSQSETTNES) the composition is skewed to polar residues. The disordered stretch occupies residues 90-115 (CTSQSETTNESSGEDKDDGKPKERRP). The segment covering 102-115 (GEDKDDGKPKERRP) has biased composition (basic and acidic residues). A DNA-binding region (DM 2) is located at residues 117 to 164 (CQRCAQHSVVNRLKGHKRACPFRDCFCAKCQVVVERQKLMADQIKLRR). The interval 166-201 (QKREKNNLNSEREAPIAHSMTPSPIDTVTTTTTPTS) is disordered. Residues 169–180 (EKNNLNSEREAP) show a composition bias toward basic and acidic residues. The span at 186-201 (TPSPIDTVTTTTTPTS) shows a compositional bias: low complexity.

Belongs to the DMRT family. In terms of tissue distribution, in males, expressed in the tail tip. Specifically, expressed in 15 male-specific muscles of the tail tip called the diagonal muscles, and also in core body muscles of both males and hermaphrodites. In males, expressed in ray A-neurons. In males, expressed in PHC sensory neurons. In males, it is also expressed in the hindgut, B lineage and somatic gonad. In hermaphrodites, expressed in the anchor cell only.

It is found in the nucleus. The protein resides in the perikaryon. Transcriptional activator which promotes male-specific development. Acts partially redundantly with the transcription factor mab-3 to coordinate tail tip cell fusion and retraction and thereby regulate male tail tip morphogenesis. This is most likely through the regulation of downstream effectors such as eff-1. May also negatively regulate the expression of other proteins implicated in male tail morphogenesis including nhr-25, vav-1 and arl-1 in tail tip cells. In males, plays a role in the development of ray A-neurons by negatively regulating the activity of the transcription factor ast-1. Plays a role in the male-specific differentiation of PHC sensory neurons into densely connected hub sensory neurons. Plays a role in male mating behavior. In Caenorhabditis elegans, this protein is Doublesex- and mab-3-related transcription factor dmd-3.